Consider the following 400-residue polypeptide: CCA-adding enzyme (400 aa).

Positions 28 and 31 each coordinate ATP. CTP contacts are provided by G28 and R31. Residues D41 and D43 each contribute to the Mg(2+) site. ATP-binding residues include R112, D155, R158, R161, and R164. CTP is bound by residues R112, D155, R158, R161, and R164.

Belongs to the tRNA nucleotidyltransferase/poly(A) polymerase family. Bacterial CCA-adding enzyme type 3 subfamily. Homodimer. The cofactor is Mg(2+).

It catalyses the reaction a tRNA precursor + 2 CTP + ATP = a tRNA with a 3' CCA end + 3 diphosphate. The catalysed reaction is a tRNA with a 3' CCA end + 2 CTP + ATP = a tRNA with a 3' CCACCA end + 3 diphosphate. In terms of biological role, catalyzes the addition and repair of the essential 3'-terminal CCA sequence in tRNAs without using a nucleic acid template. Adds these three nucleotides in the order of C, C, and A to the tRNA nucleotide-73, using CTP and ATP as substrates and producing inorganic pyrophosphate. tRNA 3'-terminal CCA addition is required both for tRNA processing and repair. Also involved in tRNA surveillance by mediating tandem CCA addition to generate a CCACCA at the 3' terminus of unstable tRNAs. While stable tRNAs receive only 3'-terminal CCA, unstable tRNAs are marked with CCACCA and rapidly degraded. The sequence is that of CCA-adding enzyme from Staphylococcus aureus (strain COL).